We begin with the raw amino-acid sequence, 113 residues long: Flagellar transcriptional regulator FlhD (113 aa).

Belongs to the FlhD family. As to quaternary structure, homodimer; disulfide-linked. Forms a heterohexamer composed of two FlhC and four FlhD subunits. Each FlhC binds a FlhD dimer, forming a heterotrimer, and a hexamer assembles by dimerization of two heterotrimers.

It localises to the cytoplasm. Functions in complex with FlhC as a master transcriptional regulator that regulates transcription of several flagellar and non-flagellar operons by binding to their promoter region. Activates expression of class 2 flagellar genes, including fliA, which is a flagellum-specific sigma factor that turns on the class 3 genes. Also regulates genes whose products function in a variety of physiological pathways. The sequence is that of Flagellar transcriptional regulator FlhD from Salmonella typhi.